Consider the following 525-residue polypeptide: Chromosomal replication initiator protein DnaA (525 aa).

The domain I, interacts with DnaA modulators stretch occupies residues 1–71 (MNDFWQHCSA…SDLAREFWNT (71 aa)). A domain II region spans residues 71-188 (TPIEVQFVLD…GEADSMYERS (118 aa)). The interval 160-182 (AAAGRRTWRPGPGAAPANGGEAD) is disordered. Over residues 169-181 (PGPGAAPANGGEA) the composition is skewed to low complexity. A domain III, AAA+ region region spans residues 189–405 (KLNPVLTFDN…GALRKILAYS (217 aa)). Glycine 233, glycine 235, lysine 236, and threonine 237 together coordinate ATP. The tract at residues 406 to 525 (KFHGREISIE…LHVLEQTLKG (120 aa)) is domain IV, binds dsDNA.

It belongs to the DnaA family. In terms of assembly, oligomerizes as a right-handed, spiral filament on DNA at oriC.

It localises to the cytoplasm. Plays an essential role in the initiation and regulation of chromosomal replication. ATP-DnaA binds to the origin of replication (oriC) to initiate formation of the DNA replication initiation complex once per cell cycle. Binds the DnaA box (a 9 base pair repeat at the origin) and separates the double-stranded (ds)DNA. Forms a right-handed helical filament on oriC DNA; dsDNA binds to the exterior of the filament while single-stranded (ss)DNA is stabiized in the filament's interior. The ATP-DnaA-oriC complex binds and stabilizes one strand of the AT-rich DNA unwinding element (DUE), permitting loading of DNA polymerase. After initiation quickly degrades to an ADP-DnaA complex that is not apt for DNA replication. Binds acidic phospholipids. In Burkholderia orbicola (strain MC0-3), this protein is Chromosomal replication initiator protein DnaA.